The chain runs to 388 residues: L-lactate dehydrogenase (388 aa).

One can recognise an FMN hydroxy acid dehydrogenase domain in the interval 1 to 380; sequence MIISAASDYR…SADALSRVTR (380 aa). Tyr24 serves as a coordination point for substrate. Positions 106 and 127 each coordinate FMN. Position 129 (Tyr129) interacts with substrate. Residue Thr155 participates in FMN binding. Arg164 contacts substrate. Residue Lys251 coordinates FMN. His275 (proton acceptor) is an active-site residue. Residue Arg278 coordinates substrate. Position 306-330 (306-330) interacts with FMN; that stretch reads DSGIRSGLDVVRMLALGADAVLLGR.

This sequence belongs to the FMN-dependent alpha-hydroxy acid dehydrogenase family. The cofactor is FMN.

It localises to the cell inner membrane. The catalysed reaction is (S)-lactate + A = pyruvate + AH2. Its function is as follows. Catalyzes the conversion of L-lactate to pyruvate. Is coupled to the respiratory chain. The polypeptide is L-lactate dehydrogenase (Xanthomonas oryzae pv. oryzae (strain MAFF 311018)).